Here is an 86-residue protein sequence, read N- to C-terminus: High affinity immunoglobulin epsilon receptor subunit gamma (86 aa).

An N-terminal signal peptide occupies residues 1-18 (MYPAVVLLLLLLVEQAAA). Residues 19–23 (LGEPQ) are Extracellular-facing. The helical transmembrane segment at 24 to 44 (LCYILDAILFLYGIILTLLYC) threads the bilayer. The Cytoplasmic segment spans residues 45–86 (RLKIQVRKATVASYEKPDGIYTGLSTRNQETYETLKHEKPPQ). Residues 54–82 (TVASYEKPDGIYTGLSTRNQETYETLKHE) enclose the ITAM domain. The residue at position 65 (Tyr-65) is a Phosphotyrosine. Ser-69 is modified (phosphoserine). Tyr-76 carries the post-translational modification Phosphotyrosine. At Thr-78 the chain carries Phosphothreonine.

Belongs to the CD3Z/FCER1G family. In terms of assembly, igE Fc receptor is a tetramer of an alpha chain, a beta chain, and two disulfide linked gamma chains. Associates with FCGR1A; forms a functional signaling complex. The signaling subunit of immunoglobulin gamma (IgG) Fc receptor complex. As a homodimer or a heterodimer of CD247 and FCER1G, associates with the ligand binding subunit FCGR3A to form a functional receptor complex. Associates with CLEC6A. Interacts with CLEC4E. Interacts (via ITAM domain) with SYK (via SH2 domains); activates SYK, enabling integrin-mediated activation of neutrophils and macrophages. Interacts with CSF2RB and recruits SYK in response to IL3 stimulation; this interaction is direct. Interacts with CD300LH; the interaction may be indirect. Interacts with CD300LD. Interacts with TARM1.

It is found in the cell membrane. Functionally, adapter protein containing an immunoreceptor tyrosine-based activation motif (ITAM) that transduces activation signals from various immunoreceptors. As a component of the high-affinity immunoglobulin E (IgE) receptor, mediates allergic inflammatory signaling in mast cells. As a constitutive component of interleukin-3 receptor complex, selectively mediates interleukin 4/IL4 production by basophils priming T-cells toward effector T-helper 2 subset. Associates with pattern recognition receptors CLEC4D and CLEC4E to form a functional signaling complex in myeloid cells. Binding of mycobacterial trehalose 6,6'-dimycolate (TDM) to this receptor complex leads to phosphorylation of ITAM, triggering activation of SYK, CARD9 and NF-kappa-B, consequently driving maturation of antigen-presenting cells and shaping antigen-specific priming of T-cells toward effector T-helper 1 and T-helper 17 cell subtypes. May function cooperatively with other activating receptors. Functionally linked to integrin beta-2/ITGB2-mediated neutrophil activation. Also involved in integrin alpha-2/ITGA2-mediated platelet activation. The chain is High affinity immunoglobulin epsilon receptor subunit gamma (FCER1G) from Cavia porcellus (Guinea pig).